A 657-amino-acid chain; its full sequence is Threonine--tRNA ligase (657 aa).

A TGS domain is found at 7 to 70 (DRQQVIITLP…TENARVSIIT (64 aa)). A catalytic region spans residues 253–555 (DHRKLGAELG…LIEHTAGNFP (303 aa)). Residues C351, H402, and H532 each coordinate Zn(2+).

Belongs to the class-II aminoacyl-tRNA synthetase family. In terms of assembly, homodimer. Zn(2+) serves as cofactor.

It is found in the cytoplasm. It catalyses the reaction tRNA(Thr) + L-threonine + ATP = L-threonyl-tRNA(Thr) + AMP + diphosphate + H(+). In terms of biological role, catalyzes the attachment of threonine to tRNA(Thr) in a two-step reaction: L-threonine is first activated by ATP to form Thr-AMP and then transferred to the acceptor end of tRNA(Thr). Also edits incorrectly charged L-seryl-tRNA(Thr). This chain is Threonine--tRNA ligase, found in Chlorobaculum tepidum (strain ATCC 49652 / DSM 12025 / NBRC 103806 / TLS) (Chlorobium tepidum).